The sequence spans 241 residues: Ubiquinone biosynthesis O-methyltransferase (241 aa).

S-adenosyl-L-methionine-binding residues include arginine 46, glycine 66, aspartate 87, and methionine 131.

This sequence belongs to the methyltransferase superfamily. UbiG/COQ3 family.

It carries out the reaction a 3-demethylubiquinol + S-adenosyl-L-methionine = a ubiquinol + S-adenosyl-L-homocysteine + H(+). The catalysed reaction is a 3-(all-trans-polyprenyl)benzene-1,2-diol + S-adenosyl-L-methionine = a 2-methoxy-6-(all-trans-polyprenyl)phenol + S-adenosyl-L-homocysteine + H(+). The protein operates within cofactor biosynthesis; ubiquinone biosynthesis. Functionally, O-methyltransferase that catalyzes the 2 O-methylation steps in the ubiquinone biosynthetic pathway. The protein is Ubiquinone biosynthesis O-methyltransferase of Bordetella avium (strain 197N).